A 602-amino-acid chain; its full sequence is Raftlin (602 aa).

A lipid anchor (N-myristoyl glycine) is attached at Gly2. Cys3 carries S-palmitoyl cysteine lipidation. The segment covering 178–195 has biased composition (polar residues); it reads TPASNNSVQSRDNKNVSN. Disordered stretches follow at residues 178–282, 451–495, and 524–567; these read TPAS…RCSK, KKES…EVTE, and NETA…QSAP. Basic and acidic residues-rich tracts occupy residues 197–209 and 244–265; these read PEDHASLDGEKID and PDCKSAKGSKEQHEHPGGREAP. The span at 468–477 shows a compositional bias: basic residues; it reads KPMKKSRKTK.

It belongs to the raftlin family.

Its subcellular location is the cell membrane. In terms of biological role, may play a pivotal role in the formation and/or maintenance of lipid rafts. May regulate B-cell antigen receptor-mediated signaling. This is Raftlin (RFTN1) from Gallus gallus (Chicken).